The chain runs to 212 residues: MAITQESKQIQVLRFIHEAQSENGYPPTVREIGEAVGLSSSSTIHGHIERLVKKGYLLKDASKPRARAIEVTDIGLEMLGISTTPGKIPVLGMVTAGTPILAVEEEATEFFPIPDNLMQFDGDLFMLNVHGDSMVNIGILDGDKVIVRKQENADNGDVVVAMNDNNEATVKRFFREADHYRLQPENNSMAPIILQKVSILGKVIGLYRDAIY.

Positions 29-49 (VREIGEAVGLSSSSTIHGHIE) form a DNA-binding region, H-T-H motif. Active-site for autocatalytic cleavage activity residues include S133 and K171.

Belongs to the peptidase S24 family. As to quaternary structure, homodimer.

It catalyses the reaction Hydrolysis of Ala-|-Gly bond in repressor LexA.. Its function is as follows. Represses a number of genes involved in the response to DNA damage (SOS response), including recA and lexA. In the presence of single-stranded DNA, RecA interacts with LexA causing an autocatalytic cleavage which disrupts the DNA-binding part of LexA, leading to derepression of the SOS regulon and eventually DNA repair. This chain is LexA repressor, found in Leuconostoc mesenteroides subsp. mesenteroides (strain ATCC 8293 / DSM 20343 / BCRC 11652 / CCM 1803 / JCM 6124 / NCDO 523 / NBRC 100496 / NCIMB 8023 / NCTC 12954 / NRRL B-1118 / 37Y).